The sequence spans 231 residues: 7-cyano-7-deazaguanine synthase (231 aa).

8–18 (LSGGLDSATAA) contributes to the ATP binding site. Residues Cys-189, Cys-197, Cys-200, and Cys-203 each coordinate Zn(2+).

Belongs to the QueC family. It depends on Zn(2+) as a cofactor.

The enzyme catalyses 7-carboxy-7-deazaguanine + NH4(+) + ATP = 7-cyano-7-deazaguanine + ADP + phosphate + H2O + H(+). Its pathway is purine metabolism; 7-cyano-7-deazaguanine biosynthesis. Catalyzes the ATP-dependent conversion of 7-carboxy-7-deazaguanine (CDG) to 7-cyano-7-deazaguanine (preQ(0)). The polypeptide is 7-cyano-7-deazaguanine synthase (Synechococcus elongatus (strain ATCC 33912 / PCC 7942 / FACHB-805) (Anacystis nidulans R2)).